Reading from the N-terminus, the 584-residue chain is uncharacterized protein (584 aa).

4 disordered regions span residues 151–188, 222–243, 399–418, and 433–584; these read EHPPPRKMTSSEKTRSENRERKKRWREQNEERNKDNDL, KRKEKERACLSQNQSSNASRAN, SETPTPVSGNGNVADAPPDF, and MQPS…AKSD. Positions 159 to 188 are enriched in basic and acidic residues; the sequence is TSSEKTRSENRERKKRWREQNEERNKDNDL. The segment covering 231–243 has biased composition (low complexity); the sequence is LSQNQSSNASRAN. Polar residues-rich tracts occupy residues 399–409, 433–453, 483–500, 511–531, and 572–584; these read SETPTPVSGNG, MQPSAVSSPMSESHVQISSEM, NAVTTPSSPYDGAQSGSP, NYSQAQSPNLATPSPSFSSLP, and QRSSSKNGTAKSD.

This is an uncharacterized protein from Schizosaccharomyces pombe (strain 972 / ATCC 24843) (Fission yeast).